The chain runs to 555 residues: Formate--tetrahydrofolate ligase (555 aa).

64 to 71 (TKAGIGKT) provides a ligand contact to ATP.

It belongs to the formate--tetrahydrofolate ligase family.

The catalysed reaction is (6S)-5,6,7,8-tetrahydrofolate + formate + ATP = (6R)-10-formyltetrahydrofolate + ADP + phosphate. It functions in the pathway one-carbon metabolism; tetrahydrofolate interconversion. The sequence is that of Formate--tetrahydrofolate ligase from Bacteroides thetaiotaomicron (strain ATCC 29148 / DSM 2079 / JCM 5827 / CCUG 10774 / NCTC 10582 / VPI-5482 / E50).